We begin with the raw amino-acid sequence, 338 residues long: Heat-inducible transcription repressor HrcA (338 aa).

It belongs to the HrcA family.

Negative regulator of class I heat shock genes (grpE-dnaK-dnaJ and groELS operons). Prevents heat-shock induction of these operons. This chain is Heat-inducible transcription repressor HrcA, found in Bacillus thuringiensis (strain Al Hakam).